Here is a 140-residue protein sequence, read N- to C-terminus: Peptide methionine sulfoxide reductase MsrB (140 aa).

One can recognise a MsrB domain in the interval 9 to 131 (DALWREKLTP…NSASIVLDSE (123 aa)). Zn(2+)-binding residues include C48, C51, C97, and C100. C120 functions as the Nucleophile in the catalytic mechanism.

It belongs to the MsrB Met sulfoxide reductase family. Zn(2+) serves as cofactor.

It catalyses the reaction L-methionyl-[protein] + [thioredoxin]-disulfide + H2O = L-methionyl-(R)-S-oxide-[protein] + [thioredoxin]-dithiol. This chain is Peptide methionine sulfoxide reductase MsrB, found in Cellvibrio japonicus (strain Ueda107) (Pseudomonas fluorescens subsp. cellulosa).